The primary structure comprises 247 residues: Proteasome subunit alpha (247 aa).

This sequence belongs to the peptidase T1A family. The 20S proteasome core is composed of 14 alpha and 14 beta subunits that assemble into four stacked heptameric rings, resulting in a barrel-shaped structure. The two inner rings, each composed of seven catalytic beta subunits, are sandwiched by two outer rings, each composed of seven alpha subunits. The catalytic chamber with the active sites is on the inside of the barrel. Has a gated structure, the ends of the cylinder being occluded by the N-termini of the alpha-subunits. Is capped at one or both ends by the proteasome regulatory ATPase, PAN.

It localises to the cytoplasm. The formation of the proteasomal ATPase PAN-20S proteasome complex, via the docking of the C-termini of PAN into the intersubunit pockets in the alpha-rings, triggers opening of the gate for substrate entry. Interconversion between the open-gate and close-gate conformations leads to a dynamic regulation of the 20S proteasome proteolysis activity. In terms of biological role, component of the proteasome core, a large protease complex with broad specificity involved in protein degradation. The chain is Proteasome subunit alpha from Methanosarcina acetivorans (strain ATCC 35395 / DSM 2834 / JCM 12185 / C2A).